Here is a 104-residue protein sequence, read N- to C-terminus: Fusaric acid biosynthesis protein 2 (104 aa).

This sequence belongs to the YciI family.

It participates in mycotoxin biosynthesis. Functionally, part of the gene cluster that mediates the biosynthesis of fusaric acid, a mycotoxin with low to moderate toxicity to animals and humans, but with high phytotoxic properties. L-aspartate is suggested as fusaric acid amino acid precursor that is activated and further processed to O-acetyl-L-homoserine by cluster enzymes aspartate kinase FUB3 and homoserine O-acetyltransferase FUB5, as well as enzymes of the primary metabolism. The polyketide synthase (PKS) FUB1 generates the triketide trans-2-hexenal which is presumptively released by the hydrolase FUB4 and linked to the NRPS-bound amino acid precursor by NAD(P)-dependent dehydrogenase FUB6. FUB1, FUB4, and the non-canonical NRPS Fub8 may form an enzyme complex. Further processing of the NRPS-bound intermediate might be carried out by FUB6 and the sulfhydrylase FUB7, enabling a spontaneous electrocyclization to close the carbon backbone of fusaric acid. Dihydrofusaric acid is likely to be released via reduction by the thioester reductase (TR) domain of FUB8 whereupon the final oxidation to fusaric acid may (also) be performed by the FMN-dependent dehydrogenase FUB9. This is Fusaric acid biosynthesis protein 2 from Gibberella moniliformis (strain M3125 / FGSC 7600) (Maize ear and stalk rot fungus).